The sequence spans 439 residues: 3-phosphoshikimate 1-carboxyvinyltransferase (439 aa).

3 residues coordinate 3-phosphoshikimate: Lys21, Ser22, and Arg26. Lys21 serves as a coordination point for phosphoenolpyruvate. Phosphoenolpyruvate is bound by residues Gly94 and Arg122. 3-phosphoshikimate is bound by residues Ser167, Gln169, Asp320, and Lys347. Gln169 contacts phosphoenolpyruvate. Catalysis depends on Asp320, which acts as the Proton acceptor. Residues Arg351 and Arg395 each coordinate phosphoenolpyruvate.

Belongs to the EPSP synthase family. In terms of assembly, monomer.

It is found in the cytoplasm. The enzyme catalyses 3-phosphoshikimate + phosphoenolpyruvate = 5-O-(1-carboxyvinyl)-3-phosphoshikimate + phosphate. Its pathway is metabolic intermediate biosynthesis; chorismate biosynthesis; chorismate from D-erythrose 4-phosphate and phosphoenolpyruvate: step 6/7. Functionally, catalyzes the transfer of the enolpyruvyl moiety of phosphoenolpyruvate (PEP) to the 5-hydroxyl of shikimate-3-phosphate (S3P) to produce enolpyruvyl shikimate-3-phosphate and inorganic phosphate. This is 3-phosphoshikimate 1-carboxyvinyltransferase from Hyphomonas neptunium (strain ATCC 15444).